The primary structure comprises 749 residues: MEQTYQYAWIIPFLPLPVPMLIGLGLLLFPTATKSLRRMWAFQSVLLLSIVMIFSMNLSIQQINSSSVYQYVWSWIINNDFSLEFGYLIDPLTSIMLILITTVGIMVLIYSDNYMSHDHGYLRFFAYMSFFSTSMLGLVTSSNLIQIYIFWELVGICSYLLIGFWFTRPVAAKACQKAFVTNRVGDFGLLLGILGFYWITGSFEFRDLFQIFNNLISNNEVNFVFVTLCAVLLFAGAVAKSAQFPLHVWLPDAMEGPTPISALIHAATMVAAGIFLVARLLPLFIVIPHIMNFISLIGIITVFLGATLALAQKDIKRGLAYSTMSQLGYMMLALGMGSYRSALFHLITHAYSKALLFLGSGSVIHSMETLVGYCPKKSQNMVLMGGLTKHVPITKTSFLLGTLSLCGIPPLACFWSKDEILNDSWLYSPIFAIIAWSTAGLTAFYMCRIYLLTFEGHLNVHFQNYSGKKNTPFYSISLWGKDGSKISNKNFRLVTLLKMKKNGRASFFSNKVYKIDDNVRNMIQPFLSIPHFGNTKTYSYPSESDNTMLFPILILILFTLFVGFLGIPFNQDGVNLDILSKWLTPSINLLHKNSNNSIDWYEFFKDAVFSVSIASFGIFIAFFLYKPVYSSFQNLDLINSFVKMGPKRIFSDKIKNGIYDWSYNRGYIDAFYGTFLTVGMRKLAEFAHFFDRRIIDGIPNGVCLISFFVAEVIKSVGGGRISSYLFFYFSYVSIFLLIYYFLNVFQNIS.

The next 17 helical transmembrane spans lie at 9 to 29 (WIIP…LLLF), 40 to 60 (WAFQ…NLSI), 89 to 109 (IDPL…MVLI), 125 to 145 (FAYM…SNLI), 147 to 167 (IYIF…FWFT), 185 to 205 (GDFG…SFEF), 219 to 239 (NEVN…GAVA), 258 to 278 (TPIS…FLVA), 290 to 312 (IMNF…ALAQ), 327 to 347 (LGYM…FHLI), 354 to 374 (ALLF…VGYC), 396 to 416 (TSFL…CFWS), 425 to 445 (WLYS…TAFY), 549 to 569 (LFPI…GIPF), 608 to 628 (VFSV…YKPV), 694 to 714 (IIDG…EVIK), and 725 to 745 (LFFY…LNVF).

It belongs to the complex I subunit 5 family. As to quaternary structure, NDH is composed of at least 16 different subunits, 5 of which are encoded in the nucleus.

It localises to the plastid. The protein localises to the chloroplast thylakoid membrane. It catalyses the reaction a plastoquinone + NADH + (n+1) H(+)(in) = a plastoquinol + NAD(+) + n H(+)(out). The catalysed reaction is a plastoquinone + NADPH + (n+1) H(+)(in) = a plastoquinol + NADP(+) + n H(+)(out). In terms of biological role, NDH shuttles electrons from NAD(P)H:plastoquinone, via FMN and iron-sulfur (Fe-S) centers, to quinones in the photosynthetic chain and possibly in a chloroplast respiratory chain. The immediate electron acceptor for the enzyme in this species is believed to be plastoquinone. Couples the redox reaction to proton translocation, and thus conserves the redox energy in a proton gradient. In Atractylodes lancea (Atractylodes japonica), this protein is NAD(P)H-quinone oxidoreductase subunit 5, chloroplastic (ndhF).